The following is a 165-amino-acid chain: Endoribonuclease YbeY (165 aa).

The Zn(2+) site is built by H130, H134, and H140.

Belongs to the endoribonuclease YbeY family. Zn(2+) is required as a cofactor.

The protein resides in the cytoplasm. Its function is as follows. Single strand-specific metallo-endoribonuclease involved in late-stage 70S ribosome quality control and in maturation of the 3' terminus of the 16S rRNA. The chain is Endoribonuclease YbeY from Streptococcus sanguinis (strain SK36).